The following is a 127-amino-acid chain: Glycine cleavage system H protein (127 aa).

In terms of domain architecture, Lipoyl-binding spans 24 to 105; that stretch reads TALAGITDFA…YGEGWLVKIK (82 aa). Lys-65 is subject to N6-lipoyllysine.

Belongs to the GcvH family. As to quaternary structure, the glycine cleavage system is composed of four proteins: P, T, L and H. The cofactor is (R)-lipoate.

The glycine cleavage system catalyzes the degradation of glycine. The H protein shuttles the methylamine group of glycine from the P protein to the T protein. This is Glycine cleavage system H protein from Chlorobium phaeobacteroides (strain DSM 266 / SMG 266 / 2430).